Reading from the N-terminus, the 156-residue chain is Lipoprotein signal peptidase (156 aa).

Helical transmembrane passes span 5 to 25 (FFVVYLIAALVIAVDQWTKQW), 63 to 83 (IEWQFWLFFAAAVTAVLAIIA), and 90 to 110 (SNPYLFTGFGLIMGGAIGNLI). Active-site residues include Asp120 and Asp138. Residues 133-153 (AFNVADMGICVGAFFVCLAVY) traverse the membrane as a helical segment.

It belongs to the peptidase A8 family.

The protein localises to the cell inner membrane. The catalysed reaction is Release of signal peptides from bacterial membrane prolipoproteins. Hydrolyzes -Xaa-Yaa-Zaa-|-(S,diacylglyceryl)Cys-, in which Xaa is hydrophobic (preferably Leu), and Yaa (Ala or Ser) and Zaa (Gly or Ala) have small, neutral side chains.. It functions in the pathway protein modification; lipoprotein biosynthesis (signal peptide cleavage). Functionally, this protein specifically catalyzes the removal of signal peptides from prolipoproteins. The protein is Lipoprotein signal peptidase of Oleidesulfovibrio alaskensis (strain ATCC BAA-1058 / DSM 17464 / G20) (Desulfovibrio alaskensis).